The sequence spans 68 residues: MFSGKEITLFALSTLIALIVLNYMSATPNPVCLIELTGHSAVLRGNNCESLTSGVIEALSAHLHGLRN.

Residues 1 to 6 (MFSGKE) are Lumenal-facing. The chain crosses the membrane as a helical span at residues 7 to 26 (ITLFALSTLIALIVLNYMSA). Topologically, residues 27–68 (TPNPVCLIELTGHSAVLRGNNCESLTSGVIEALSAHLHGLRN) are cytoplasmic.

Belongs to the Tymovirales TGBp3 protein family.

Its subcellular location is the host endoplasmic reticulum membrane. In terms of biological role, plays a role in viral cell-to-cell propagation, by facilitating genome transport to neighboring plant cells through plasmosdesmata. May induce the formation of granular vesicles derived from the Endoplasmic reticulum, which align on actin filaments. This Papaya mosaic potexvirus (PMV) protein is Movement protein TGBp3.